Here is a 227-residue protein sequence, read N- to C-terminus: UPF0659 protein YMR090W (227 aa).

Belongs to the UPF0659 family.

The protein resides in the cytoplasm. In Saccharomyces cerevisiae (strain ATCC 204508 / S288c) (Baker's yeast), this protein is UPF0659 protein YMR090W.